A 297-amino-acid polypeptide reads, in one-letter code: Octopine catabolism/uptake operon regulatory protein OccR (297 aa).

The 58-residue stretch at 1–58 folds into the HTH lysR-type domain; that stretch reads MNLRQVEAFRAVMLTGQMTAAAELMLVTQPAISRLIKDFERATKLQLFERRGNHIIPT. A DNA-binding region (H-T-H motif) is located at residues 18–37; sequence MTAAAELMLVTQPAISRLIK.

Belongs to the LysR transcriptional regulatory family.

In terms of biological role, positive regulatory protein for the occ operon involved in octopine catabolism and uptake. Also acts as a negative regulator of its expression. This is Octopine catabolism/uptake operon regulatory protein OccR (occR) from Rhizobium meliloti (Ensifer meliloti).